Here is a 192-residue protein sequence, read N- to C-terminus: Intraflagellar transport protein 22 (192 aa).

Residues 12 to 19 (GPQRTGKT) and 62 to 69 (WDVSGSVQ) each bind GTP.

Belongs to the small GTPase superfamily. Rab family. As to quaternary structure, component of the IFT complex B, composed of IFT88, IFT70, IFT52, IFT46, IFT27, IFT25 and IFT22.

Its subcellular location is the cell projection. The protein resides in the cilium. It is found in the flagellum. Functionally, component of the intraflagellar transport (IFT) complex B. Functions in regulating the cellular pool size of both complex A and complex B and thus plays a critical role in determining the cellular availability of IFT particles. This is Intraflagellar transport protein 22 (FAP9) from Chlamydomonas reinhardtii (Chlamydomonas smithii).